The chain runs to 209 residues: Protein lin-28 homolog A (209 aa).

The segment at 1–31 (MGSVSNQQFAGGCAKAAEEAPEEAPEDAARA) is disordered. Position 2 is an N-acetylglycine (glycine 2). A Phosphoserine modification is found at serine 3. The 74-residue stretch at 39–112 (HGAGICKWFN…GLESIRVTGP (74 aa)) folds into the CSD domain. The interval 113-136 (GGVFCIGSERRPKGKSMQKRRSKG) is flexible linker. Serine 120 carries the phosphoserine modification. 2 consecutive CCHC-type zinc fingers follow at residues 137 to 154 (DRCY…ECKL) and 159 to 176 (KKCH…SCPL). The interval 178 to 209 (AQQGPSAQGKPTYFREEEEEIHSPTLLPEAQN) is disordered. The residue at position 200 (serine 200) is a Phosphoserine.

It belongs to the lin-28 family. In terms of assembly, monomer. During skeletal muscle differentiation, associated with translation initiation complexes in the polysomal compartment. Directly interacts with EIF3S2. Interacts with NCL in an RNA-dependent manner. Interacts (via C-terminus) with DHX9 (via N- and C-terminus); this interaction occurs in a RNA-independent manner. Interacts with TUT4 in the presence of pre-let-7 RNA. Expressed in embryonic stem cells, placenta and testis. Tends to be up-regulated in HER2-overexpressing breast tumors.

The protein localises to the cytoplasm. It is found in the rough endoplasmic reticulum. It localises to the P-body. The protein resides in the stress granule. Its subcellular location is the nucleus. The protein localises to the nucleolus. RNA-binding protein that inhibits processing of pre-let-7 miRNAs and regulates translation of mRNAs that control developmental timing, pluripotency and metabolism. Seems to recognize a common structural G-quartet (G4) feature in its miRNA and mRNA targets. 'Translational enhancer' that drives specific mRNAs to polysomes and increases the efficiency of protein synthesis. Its association with the translational machinery and target mRNAs results in an increased number of initiation events per molecule of mRNA and, indirectly, in mRNA stabilization. Binds IGF2 mRNA, MYOD1 mRNA, ARBP/36B4 ribosomal protein mRNA and its own mRNA. Essential for skeletal muscle differentiation program through the translational up-regulation of IGF2 expression. Suppressor of microRNA (miRNA) biogenesis, including that of let-7, miR107, miR-143 and miR-200c. Specifically binds the miRNA precursors (pre-miRNAs), recognizing an 5'-GGAG-3' motif found in pre-miRNA terminal loop, and recruits TUT4 and TUT7 uridylyltransferases. This results in the terminal uridylation of target pre-miRNAs. Uridylated pre-miRNAs fail to be processed by Dicer and undergo degradation. The repression of let-7 expression is required for normal development and contributes to maintain the pluripotent state by preventing let-7-mediated differentiation of embryonic stem cells. Localized to the periendoplasmic reticulum area, binds to a large number of spliced mRNAs and inhibits the translation of mRNAs destined for the ER, reducing the synthesis of transmembrane proteins, ER or Golgi lumen proteins, and secretory proteins. Binds to and enhances the translation of mRNAs for several metabolic enzymes, such as PFKP, PDHA1 or SDHA, increasing glycolysis and oxidative phosphorylation. Which, with the let-7 repression may enhance tissue repair in adult tissue. The protein is Protein lin-28 homolog A (LIN28A) of Homo sapiens (Human).